Consider the following 62-residue polypeptide: Prokaryotic ubiquitin-like protein Pup (62 aa).

Residues 1 to 36 (MEKSSQIHGSKPGDDNADEPENAAGQSQIRKQGADD) are disordered. The tract at residues 18 to 56 (DEPENAAGQSQIRKQGADDLLDEIDGLLESNAEEFVRSY) is ARC ATPase binding. A Deamidated glutamine modification is found at Q62. Q62 participates in a covalent cross-link: Isoglutamyl lysine isopeptide (Gln-Lys) (interchain with K-? in acceptor proteins).

This sequence belongs to the prokaryotic ubiquitin-like protein family. Strongly interacts with the proteasome-associated ATPase ARC through a hydrophobic interface; the interacting region of Pup lies in its C-terminal half. There is one Pup binding site per ARC hexamer ring. Post-translationally, is modified by deamidation of its C-terminal glutamine to glutamate by the deamidase Dop, a prerequisite to the subsequent pupylation process.

The protein operates within protein degradation; proteasomal Pup-dependent pathway. Protein modifier that is covalently attached to lysine residues of substrate proteins, thereby targeting them for proteasomal degradation. The tagging system is termed pupylation. In Corynebacterium kroppenstedtii (strain DSM 44385 / JCM 11950 / CIP 105744 / CCUG 35717), this protein is Prokaryotic ubiquitin-like protein Pup.